The following is a 286-amino-acid chain: Putative WUSCHEL-related homeobox 2 (286 aa).

2 disordered regions span residues 1–25 (MAPA…VGST) and 128–152 (SSSS…SPTT). Residues 23–87 (GSTTRWCPTP…NHKARDRQKL (65 aa)) constitute a DNA-binding region (homeobox; WUS-type).

Belongs to the WUS homeobox family.

Its subcellular location is the nucleus. In terms of biological role, transcription factor which may be involved in developmental processes. The polypeptide is Putative WUSCHEL-related homeobox 2 (WOX2) (Oryza sativa subsp. indica (Rice)).